A 411-amino-acid chain; its full sequence is Methyl-CpG-binding domain protein 2 (411 aa).

Positions 1–149 are required for interaction with DHX9 and PRMT5; sequence MRAHPGGGRC…GPRATESGKR (149 aa). Residues 1 to 158 form a disordered region; the sequence is MRAHPGGGRC…RMDCPALPPG (158 aa). The segment covering 77 to 95 has biased composition (basic residues); that stretch reads GRGRGRGRGRGRGRGRGRG. Gly residues predominate over residues 98–121; sequence PSGGSGLGGDGGGCGGGGSGGGGA. The 69-residue stretch at 145–213 folds into the MBD domain; sequence ESGKRMDCPA…SSFDFRTGKM (69 aa). At serine 181 the chain carries Phosphoserine. A disordered region spans residues 214-241; that stretch reads MPSKLQKNKQRLRNDPLNQNKGKPDLNT. The span at 229–241 shows a compositional bias: polar residues; that stretch reads PLNQNKGKPDLNT. Residue serine 407 is modified to Phosphoserine.

Heterodimer with MBD3 (via N-terminus). Component of the MeCP1 complex that contains HDAC1 and HDAC2. Component of the nucleosome remodeling and deacetylase (NuRD) repressor complex, composed of core proteins MTA1, MTA2, MTA3, RBBP4, RBBP7, HDAC1, HDAC2, MBD2, MBD3, and peripherally associated proteins CDK2AP1, CDK2AP2, GATAD2A, GATAD2B, CHD3, CHD4 and CHD5. The exact stoichiometry of the NuRD complex is unknown, and some subunits such as MBD2 and MBD3, GATAD2A and GATAD2B, and CHD3, CHD4 and CHD5 define mutually exclusive NuRD complexes. Interacts with CDK2AP1. Interacts with DHX9. Interacts with DNMT1. Interacts with GATAD2A/p66-alpha. Interacts with GATAD2B/p66-beta. Interacts with GPN1. Interacts with MIZF. Interacts with PRMT5. Interacts with SIN3A. Interacts with SPHK2. Highly expressed in brain, heart, kidney, stomach, testis and placenta.

The protein localises to the nucleus. The protein resides in the chromosome. Functionally, binds CpG islands in promoters where the DNA is methylated at position 5 of cytosine within CpG dinucleotides. Binds hemimethylated DNA as well. Recruits histone deacetylases and DNA methyltransferases to chromatin. Acts as a component of the histone deacetylase NuRD complex which participates in the remodeling of chromatin. Acts as a transcriptional repressor and plays a role in gene silencing. Functions as a scaffold protein, targeting GATAD2A and GATAD2B to chromatin to promote repression. May enhance the activation of some unmethylated cAMP-responsive promoters. This chain is Methyl-CpG-binding domain protein 2, found in Homo sapiens (Human).